Here is a 180-residue protein sequence, read N- to C-terminus: MALSREETARRYGTAIFDFAKDSGKTELMYSELTELKKAVQAEPRFVQVLSNPVLDAKQKKSLLTAVEQGFSAELQEVLNFLLSYDRFDNLVDIIDYYIHLYNAANHIGTGVAKTVLKLDEDQLQRLADSYAKKYGLQALHLENEVDPEIIGGVVLEVEGRVIDGSVKHRLEKIRAMLTK.

Belongs to the ATPase delta chain family. In terms of assembly, F-type ATPases have 2 components, F(1) - the catalytic core - and F(0) - the membrane proton channel. F(1) has five subunits: alpha(3), beta(3), gamma(1), delta(1), epsilon(1). F(0) has three main subunits: a(1), b(2) and c(10-14). The alpha and beta chains form an alternating ring which encloses part of the gamma chain. F(1) is attached to F(0) by a central stalk formed by the gamma and epsilon chains, while a peripheral stalk is formed by the delta and b chains.

The protein localises to the cell membrane. Its function is as follows. F(1)F(0) ATP synthase produces ATP from ADP in the presence of a proton or sodium gradient. F-type ATPases consist of two structural domains, F(1) containing the extramembraneous catalytic core and F(0) containing the membrane proton channel, linked together by a central stalk and a peripheral stalk. During catalysis, ATP synthesis in the catalytic domain of F(1) is coupled via a rotary mechanism of the central stalk subunits to proton translocation. In terms of biological role, this protein is part of the stalk that links CF(0) to CF(1). It either transmits conformational changes from CF(0) to CF(1) or is implicated in proton conduction. This chain is ATP synthase subunit delta, found in Lactobacillus delbrueckii subsp. bulgaricus (strain ATCC 11842 / DSM 20081 / BCRC 10696 / JCM 1002 / NBRC 13953 / NCIMB 11778 / NCTC 12712 / WDCM 00102 / Lb 14).